The chain runs to 155 residues: Ciliary microtubule inner protein 2C (155 aa).

It belongs to the CIMIP2 family.

The protein localises to the cytoplasm. It localises to the cytoskeleton. It is found in the cilium axoneme. Functionally, microtubule inner protein (MIP) part of the dynein-decorated doublet microtubules (DMTs) in cilia axoneme, which is required for motile cilia beating. The protein is Ciliary microtubule inner protein 2C (cimip2ca) of Xenopus laevis (African clawed frog).